Consider the following 189-residue polypeptide: GMP synthase [glutamine-hydrolyzing] subunit A (189 aa).

Residues 1-189 (MIVILNNGGQ…CKKCGFEFEE (189 aa)) enclose the Glutamine amidotransferase type-1 domain. Residue cysteine 76 is the Nucleophile of the active site. Catalysis depends on residues histidine 163 and glutamate 165.

In terms of assembly, heterodimer composed of a glutamine amidotransferase subunit (A) and a GMP-binding subunit (B).

It catalyses the reaction XMP + L-glutamine + ATP + H2O = GMP + L-glutamate + AMP + diphosphate + 2 H(+). The protein operates within purine metabolism; GMP biosynthesis; GMP from XMP (L-Gln route): step 1/1. Its function is as follows. Catalyzes the synthesis of GMP from XMP. The polypeptide is GMP synthase [glutamine-hydrolyzing] subunit A (Methanococcus maripaludis (strain C7 / ATCC BAA-1331)).